The chain runs to 336 residues: Probable tRNA pseudouridine synthase B (336 aa).

The active-site Nucleophile is the D81. In terms of domain architecture, PUA spans 248 to 323 (LKKVVVKDSA…VAVDVERVYM (76 aa)).

It belongs to the pseudouridine synthase TruB family. Type 2 subfamily.

The enzyme catalyses uridine(55) in tRNA = pseudouridine(55) in tRNA. Its function is as follows. Could be responsible for synthesis of pseudouridine from uracil-55 in the psi GC loop of transfer RNAs. The chain is Probable tRNA pseudouridine synthase B from Methanocaldococcus jannaschii (strain ATCC 43067 / DSM 2661 / JAL-1 / JCM 10045 / NBRC 100440) (Methanococcus jannaschii).